Consider the following 512-residue polypeptide: D-alanine--D-alanyl carrier protein ligase (512 aa).

Thr152–Ser153 contacts ATP. Asp199 serves as a coordination point for D-alanine. Asn294 to Thr299 provides a ligand contact to ATP. Residue Val303 participates in D-alanine binding. ATP contacts are provided by residues Asp385, Tyr397–Arg400, and Lys499. Lys499 serves as a coordination point for D-alanine.

It belongs to the ATP-dependent AMP-binding enzyme family. DltA subfamily.

It is found in the cytoplasm. The enzyme catalyses holo-[D-alanyl-carrier protein] + D-alanine + ATP = D-alanyl-[D-alanyl-carrier protein] + AMP + diphosphate. It functions in the pathway cell wall biogenesis; lipoteichoic acid biosynthesis. Functionally, catalyzes the first step in the D-alanylation of lipoteichoic acid (LTA), the activation of D-alanine and its transfer onto the D-alanyl carrier protein (Dcp) DltC. In an ATP-dependent two-step reaction, forms a high energy D-alanyl-AMP intermediate, followed by transfer of the D-alanyl residue as a thiol ester to the phosphopantheinyl prosthetic group of the Dcp. D-alanylation of LTA plays an important role in modulating the properties of the cell wall in Gram-positive bacteria, influencing the net charge of the cell wall. This is D-alanine--D-alanyl carrier protein ligase from Streptococcus pyogenes serotype M4 (strain MGAS10750).